A 795-amino-acid polypeptide reads, in one-letter code: Phenylalanine--tRNA ligase beta subunit (795 aa).

The tRNA-binding domain occupies 39–148; the sequence is AGTFNGVKVG…IDAPIGMDFR (110 aa). In terms of domain architecture, B5 spans 401 to 476; the sequence is PKPNKVALRR…RIYGYDNIPN (76 aa). Mg(2+) contacts are provided by Asp-454, Asp-460, Glu-463, and Glu-464. Positions 701–794 constitute an FDX-ACB domain; it reads SKFPANRRDI…VSEKFGASLR (94 aa).

It belongs to the phenylalanyl-tRNA synthetase beta subunit family. Type 1 subfamily. In terms of assembly, tetramer of two alpha and two beta subunits. The cofactor is Mg(2+).

The protein resides in the cytoplasm. The enzyme catalyses tRNA(Phe) + L-phenylalanine + ATP = L-phenylalanyl-tRNA(Phe) + AMP + diphosphate + H(+). The polypeptide is Phenylalanine--tRNA ligase beta subunit (Vibrio vulnificus (strain YJ016)).